The following is a 245-amino-acid chain: tRNA pseudouridine synthase A (245 aa).

Asp52 functions as the Nucleophile in the catalytic mechanism. Tyr111 contacts substrate.

The protein belongs to the tRNA pseudouridine synthase TruA family. Homodimer.

The catalysed reaction is uridine(38/39/40) in tRNA = pseudouridine(38/39/40) in tRNA. Formation of pseudouridine at positions 38, 39 and 40 in the anticodon stem and loop of transfer RNAs. The chain is tRNA pseudouridine synthase A from Xanthobacter autotrophicus (strain ATCC BAA-1158 / Py2).